We begin with the raw amino-acid sequence, 169 residues long: NAD(P)H-quinone oxidoreductase subunit J, chloroplastic (169 aa).

This sequence belongs to the complex I 30 kDa subunit family. In terms of assembly, NDH is composed of at least 16 different subunits, 5 of which are encoded in the nucleus.

Its subcellular location is the plastid. The protein localises to the chloroplast thylakoid membrane. The enzyme catalyses a plastoquinone + NADH + (n+1) H(+)(in) = a plastoquinol + NAD(+) + n H(+)(out). The catalysed reaction is a plastoquinone + NADPH + (n+1) H(+)(in) = a plastoquinol + NADP(+) + n H(+)(out). NDH shuttles electrons from NAD(P)H:plastoquinone, via FMN and iron-sulfur (Fe-S) centers, to quinones in the photosynthetic chain and possibly in a chloroplast respiratory chain. The immediate electron acceptor for the enzyme in this species is believed to be plastoquinone. Couples the redox reaction to proton translocation, and thus conserves the redox energy in a proton gradient. This chain is NAD(P)H-quinone oxidoreductase subunit J, chloroplastic, found in Anthoceros angustus (Hornwort).